The primary structure comprises 790 residues: MKGMREKTLKSLEFDKIVKLIANECDSELGREKVFDIEIKKDLKAIEFELDLLNEAVKFIYSYGDISFSFQDIREHVKKAQIDYILYNRELLGIKNFLSLVEEVKAHFKSLYDREDFLLLKEFDKRLVPLKSLKEKIENTVISEDEISDEASPVLKAIRRQKASINEKIKSTLNSIISTRQKELQEPIITMRQGRYVVPVKQEYRNVFKGIIHDQSSTGATLFIEPIQVVDLNNELRELELKEQKEIERILFELSQEVKKNAEAIFKDVEVVSELDFLFAKARYSIKIKASRPELNTSGYVNLKKARHPLIDPEKVVPIDIHIGREFTTLVITGPNTGGKTVTLKTVGLLTLMAMAGINIPAEEKSQISIFEDVFVDIGDEQSIEQSLSTFSSHMTNIVSILKKVNKNSLVLLDELGAGTDPLEGSALAMSILDFLHRTGCRTIATTHYSELKQYALKTKGVENASVEFDVETLRPTYRLIIGIPGRSNAFEISRRLGLSEEIIENAKSYMSGEAIRFEDVIKDVEEKRKDLENAYQEVERLKKEVEVLKEELEKEKRKLESQKDKILKEAKEKAREIIKEAKQTAEEVIKRIKEAEEKEKNKDRAIQEIREKIKKNLEELEEEVLKPKEFSYGKIPDSLKAGQTVYIVPLDQNGIVLSPPDASGNVEVQAGILKMTVHISNLRVKEEQEQEEVKKGYSRFINEKAKSISPSLDVRGMTLDDALLEVEKYIDDAYLAGLNQVTIIHGRGTGVLRTGIAKFLRNSKYVKSFRLGRYGEGGDGVTIVELHSR.

An ATP-binding site is contributed by 334 to 341; that stretch reads GPNTGGKT. Residues 713–788 enclose the Smr domain; sequence LDVRGMTLDD…GDGVTIVELH (76 aa).

This sequence belongs to the DNA mismatch repair MutS family. MutS2 subfamily. In terms of assembly, homodimer. Binds to stalled ribosomes, contacting rRNA.

Its function is as follows. Endonuclease that is involved in the suppression of homologous recombination and thus may have a key role in the control of bacterial genetic diversity. Acts as a ribosome collision sensor, splitting the ribosome into its 2 subunits. Detects stalled/collided 70S ribosomes which it binds and splits by an ATP-hydrolysis driven conformational change. Acts upstream of the ribosome quality control system (RQC), a ribosome-associated complex that mediates the extraction of incompletely synthesized nascent chains from stalled ribosomes and their subsequent degradation. Probably generates substrates for RQC. The sequence is that of Endonuclease MutS2 from Caldanaerobacter subterraneus subsp. tengcongensis (strain DSM 15242 / JCM 11007 / NBRC 100824 / MB4) (Thermoanaerobacter tengcongensis).